The primary structure comprises 778 residues: MADDGMLLNFALPSDVIKPQTKIKGGSWRERLSVKKIAARRATNPKRTADGDGNKDGNESGPRNPNRIQVSGSRPAKRQKTDGGFQKLGEGQAHGQGSGQSKGPKKGQGGSVVSSLFSKNPRPRNAVEEDKNDEPMEDAKPTNAPLIDGLDTFTNLGLSPTLAAHLLTKLELKAPTAIQKASITQLLKEETDAFIQAETGSGKTLAYLLPLVQRIMALSRAKNEGDAKGDTSVHRDSGLFAIILAPTRELCKQISVVLEGLLRCAHWIVAGTVIGGEKKKSEKARLRKGLNILVATPGRLADHLENTQALDVSNVRWLVLDEGDRLMELGFEKELQEIISKLDARQRPSRIPGVPAKRATILCSATLKMNVQKLGEISLKDAVHIKADPADEDGEKTAEDKDGDAFRVPAQLKQSYAIVAAKLRLVTLTAFMKRTFMRKGSVMKAIIFVSCADSVNFHFEVFTRKLAEQLEGDNPDEGSDSEHEKEKEKEKPTPASTHGTVAPATAFSNSSNAVTMYKLHGSLPQHVRTSTLSSFAKNRDPSVLICTDVASRGLDLPNVDLVVEYDPAFSADEHLHRIGRTARLGRDGRALVFLLPGCEENYVEILKRGYRDGGKALTRSTTDDILKRGFGGNIESQKWQLELERWALDNPEYLEMARRAYQSHIRAYATHVANERHIFNIKELHLGHLAKSFALRDRPGKINVPGLRPGKEDTKKDFKAERKSAGGKKRKATGYGGGRDDDDDDDRPSATTDTTLAAQKMRAKMKEQLAGASEFNLA.

The tract at residues Gln-20–Ala-144 is disordered. Residues Arg-47–Asn-58 show a composition bias toward basic and acidic residues. Positions Gly-61–Gly-72 are enriched in polar residues. Gly residues predominate over residues Gln-92–Gly-110. Residues Asn-125–Lys-140 are compositionally biased toward basic and acidic residues. The Q motif signature appears at Asp-151–Lys-180. The Helicase ATP-binding domain occupies Thr-184–Ile-385. Ala-197–Thr-204 is a binding site for ATP. Residues Asp-321 to Asp-324 carry the DEAD box motif. The 215-residue stretch at Gln-411 to Ile-625 folds into the Helicase C-terminal domain. Acidic residues predominate over residues Leu-470–Ser-479. 2 disordered regions span residues Leu-470–Pro-503 and Gly-700–Ala-778. 2 stretches are compositionally biased toward basic and acidic residues: residues Asp-480–Pro-492 and Pro-709–Ser-724.

Belongs to the DEAD box helicase family. DDX31/DBP7 subfamily.

Its subcellular location is the nucleus. It localises to the nucleolus. It carries out the reaction ATP + H2O = ADP + phosphate + H(+). ATP-binding RNA helicase involved in the biogenesis of 60S ribosomal subunits and is required for the normal formation of 25S and 5.8S rRNAs. The chain is ATP-dependent RNA helicase dbp7 (dbp7) from Emericella nidulans (strain FGSC A4 / ATCC 38163 / CBS 112.46 / NRRL 194 / M139) (Aspergillus nidulans).